A 510-amino-acid chain; its full sequence is Chorion transcription factor Cf2 (510 aa).

A compositionally biased stretch (polar residues) spans 1 to 10 (MIKSTTNPQE). A disordered region spans residues 1–40 (MIKSTTNPQEQRLPRPEDQSPAPPPPPPSSATTSTAAPAT). A compositionally biased stretch (low complexity) spans 30-40 (SATTSTAAPAT). C2H2-type zinc fingers lie at residues 74 to 97 (HYCPMCHQQFERPQHVADHMQLCH) and 125 to 148 (HPCFNCDEKFGNAVDLDEHHRLAH). A compositionally biased stretch (basic and acidic residues) spans 222–237 (PEEQHHQQQLQAEHHH). The tract at residues 222-279 (PEEQHHQQQLQAEHHHQQQHQQQQQQQQQQQELLEQQQREMQEQAQQQQVHHHQQDQD) is disordered. Residues 240–257 (QHQQQQQQQQQQQELLEQ) are compositionally biased toward low complexity. 5 C2H2-type zinc fingers span residues 366–388 (HKCPDCPKTFKTPGTLAMHRKIH), 401–423 (YTCSYCGKSFTQSNTLKQHTRIH), 429–451 (FRCGYCGRAFTVKDYLNKHLTTH), 457–479 (FHCGYCEKSFSVKDYLTKHIRTH), and 485–508 (YTCPYCDKRFTQRSALTVHTTKLH).

In terms of tissue distribution, isoform I is found in embryos, pupae and adult somatic tissue; isoform II occurs in embryos, pupae, ovaries, testis and to a lesser extent in adult somatic tissue.

Its subcellular location is the nucleus. Its function is as follows. Transcriptional regulator; binds to the promoter region of Cp15. Also binds to its own promoter, thus having a probable autoregulatory role. This is Chorion transcription factor Cf2 (Cf2) from Drosophila melanogaster (Fruit fly).